A 940-amino-acid polypeptide reads, in one-letter code: Isoleucine--tRNA ligase (940 aa).

The 'HIGH' region motif lies at 58 to 68 (PYANGSIHIGH). Glutamate 564 lines the L-isoleucyl-5'-AMP pocket. The 'KMSKS' region motif lies at 605–609 (KMSKS). Lysine 608 contacts ATP. 4 residues coordinate Zn(2+): cysteine 903, cysteine 906, cysteine 923, and cysteine 926.

This sequence belongs to the class-I aminoacyl-tRNA synthetase family. IleS type 1 subfamily. Monomer. Zn(2+) is required as a cofactor.

Its subcellular location is the cytoplasm. The enzyme catalyses tRNA(Ile) + L-isoleucine + ATP = L-isoleucyl-tRNA(Ile) + AMP + diphosphate. Functionally, catalyzes the attachment of isoleucine to tRNA(Ile). As IleRS can inadvertently accommodate and process structurally similar amino acids such as valine, to avoid such errors it has two additional distinct tRNA(Ile)-dependent editing activities. One activity is designated as 'pretransfer' editing and involves the hydrolysis of activated Val-AMP. The other activity is designated 'posttransfer' editing and involves deacylation of mischarged Val-tRNA(Ile). This chain is Isoleucine--tRNA ligase, found in Shewanella baltica (strain OS223).